The primary structure comprises 360 residues: S-adenosylmethionine decarboxylase proenzyme (360 aa).

Residues Glu13 and Glu16 contribute to the active site. Catalysis depends on Ser73, which acts as the Schiff-base intermediate with substrate; via pyruvic acid. The residue at position 73 (Ser73) is a Pyruvic acid (Ser); by autocatalysis. The active-site Proton donor; for catalytic activity is the Cys87. Catalysis depends on proton acceptor; for processing activity residues Ser236 and His249.

This sequence belongs to the eukaryotic AdoMetDC family. Pyruvate is required as a cofactor. Post-translationally, is synthesized initially as an inactive proenzyme. Formation of the active enzyme involves a self-maturation process in which the active site pyruvoyl group is generated from an internal serine residue via an autocatalytic post-translational modification. Two non-identical subunits are generated from the proenzyme in this reaction, and the pyruvate is formed at the N-terminus of the alpha chain, which is derived from the carboxyl end of the proenzyme. The post-translation cleavage follows an unusual pathway, termed non-hydrolytic serinolysis, in which the side chain hydroxyl group of the serine supplies its oxygen atom to form the C-terminus of the beta chain, while the remainder of the serine residue undergoes an oxidative deamination to produce ammonia and the pyruvoyl group blocking the N-terminus of the alpha chain. Stolon, also expressed in leaves, stems and roots.

It catalyses the reaction S-adenosyl-L-methionine + H(+) = S-adenosyl 3-(methylsulfanyl)propylamine + CO2. It participates in amine and polyamine biosynthesis; S-adenosylmethioninamine biosynthesis; S-adenosylmethioninamine from S-adenosyl-L-methionine: step 1/1. The chain is S-adenosylmethionine decarboxylase proenzyme (SAMDC) from Solanum tuberosum (Potato).